The chain runs to 269 residues: 4-hydroxy-tetrahydrodipicolinate reductase (269 aa).

Residues 8–13 (GAAGRM) and glutamate 34 each bind NAD(+). Arginine 35 contributes to the NADP(+) binding site. NAD(+) is bound by residues 98 to 100 (GTT) and 122 to 125 (APNY). Histidine 155 serves as the catalytic Proton donor/acceptor. Residue histidine 156 coordinates (S)-2,3,4,5-tetrahydrodipicolinate. Catalysis depends on lysine 159, which acts as the Proton donor. Position 165 to 166 (165 to 166 (GT)) interacts with (S)-2,3,4,5-tetrahydrodipicolinate.

It belongs to the DapB family.

Its subcellular location is the cytoplasm. It catalyses the reaction (S)-2,3,4,5-tetrahydrodipicolinate + NAD(+) + H2O = (2S,4S)-4-hydroxy-2,3,4,5-tetrahydrodipicolinate + NADH + H(+). It carries out the reaction (S)-2,3,4,5-tetrahydrodipicolinate + NADP(+) + H2O = (2S,4S)-4-hydroxy-2,3,4,5-tetrahydrodipicolinate + NADPH + H(+). It participates in amino-acid biosynthesis; L-lysine biosynthesis via DAP pathway; (S)-tetrahydrodipicolinate from L-aspartate: step 4/4. In terms of biological role, catalyzes the conversion of 4-hydroxy-tetrahydrodipicolinate (HTPA) to tetrahydrodipicolinate. This Aliivibrio fischeri (strain ATCC 700601 / ES114) (Vibrio fischeri) protein is 4-hydroxy-tetrahydrodipicolinate reductase.